Reading from the N-terminus, the 382-residue chain is Ribosomal RNA large subunit methyltransferase F (382 aa).

Disordered regions lie at residues 1-53 and 269-288; these read MTKP…LHRD and NRASKGHKLEPKAPKDKSQL. Residues 8 to 24 show a composition bias toward basic residues; that stretch reads ASRKPVTKSGRNSKRSR. The segment covering 269-286 has biased composition (basic and acidic residues); it reads NRASKGHKLEPKAPKDKS.

The protein belongs to the methyltransferase superfamily. METTL16/RlmF family.

It localises to the cytoplasm. The catalysed reaction is adenosine(1618) in 23S rRNA + S-adenosyl-L-methionine = N(6)-methyladenosine(1618) in 23S rRNA + S-adenosyl-L-homocysteine + H(+). In terms of biological role, specifically methylates the adenine in position 1618 of 23S rRNA. This is Ribosomal RNA large subunit methyltransferase F from Shewanella woodyi (strain ATCC 51908 / MS32).